Here is a 715-residue protein sequence, read N- to C-terminus: Protein DENND6 homolog (715 aa).

Positions 13–58 (MIFKEEEIKKQQILLEKEEKEKQEQQQKKLNKDNIFKLEEEGKKLE) form a coiled coil. The uDENN domain maps to 96–273 (NSFCIINFDL…VKQHQLGGGS (178 aa)). Disordered stretches follow at residues 269–296 (LGGG…SNTT) and 392–416 (SGTR…NNNN). A cDENN domain is found at 299–476 (SPSIWSEMKL…KDLLTRHVLD (178 aa)). The segment covering 399–416 (SNNNNNQDDSEYNNNNNN) has biased composition (low complexity). The region spanning 478–600 (KEKILSEYKP…KQWLDDKRAQ (123 aa)) is the dDENN domain.

This sequence belongs to the DENND6 family.

The chain is Protein DENND6 homolog from Dictyostelium discoideum (Social amoeba).